Reading from the N-terminus, the 341-residue chain is Methionine import ATP-binding protein MetN 2 (341 aa).

One can recognise an ABC transporter domain in the interval 2–241; the sequence is IELKEVVKEY…PQHTVTKRFV (240 aa). 38–45 contacts ATP; sequence GFSGAGKS.

It belongs to the ABC transporter superfamily. Methionine importer (TC 3.A.1.24) family. As to quaternary structure, the complex is composed of two ATP-binding proteins (MetN), two transmembrane proteins (MetI) and a solute-binding protein (MetQ).

It is found in the cell membrane. The catalysed reaction is L-methionine(out) + ATP + H2O = L-methionine(in) + ADP + phosphate + H(+). It catalyses the reaction D-methionine(out) + ATP + H2O = D-methionine(in) + ADP + phosphate + H(+). Part of the ABC transporter complex MetNIQ involved in methionine import. Responsible for energy coupling to the transport system. The chain is Methionine import ATP-binding protein MetN 2 from Staphylococcus aureus (strain USA300).